Consider the following 113-residue polypeptide: MLLLLVPVLEVIFTLGGTRAQSVTQLGSHVSVSEGALVLLRCNYSSSVPPYLFWYVQYPNQGLQLLLKYTSAATLVKGINGFEAEFKKSETSFHLTKPSAHMSDAAEYFCAVS.

The first 20 residues, 1–20 (MLLLLVPVLEVIFTLGGTRA), serve as a signal peptide directing secretion. An Ig-like domain is found at 21–113 (QSVTQLGSHV…DAAEYFCAVS (93 aa)). C42 and C110 are joined by a disulfide. N43 carries an N-linked (GlcNAc...) asparagine glycan.

As to quaternary structure, alpha-beta TR is a heterodimer composed of an alpha and beta chain; disulfide-linked. The alpha-beta TR is associated with the transmembrane signaling CD3 coreceptor proteins to form the TR-CD3 (TcR or TCR). The assembly of alpha-beta TR heterodimers with CD3 occurs in the endoplasmic reticulum where a single alpha-beta TR heterodimer associates with one CD3D-CD3E heterodimer, one CD3G-CD3E heterodimer and one CD247 homodimer forming a stable octameric structure. CD3D-CD3E and CD3G-CD3E heterodimers preferentially associate with TR alpha and TR beta chains, respectively. The association of the CD247 homodimer is the last step of TcR assembly in the endoplasmic reticulum and is required for transport to the cell surface.

It is found in the cell membrane. In terms of biological role, v region of the variable domain of T cell receptor (TR) alpha chain that participates in the antigen recognition. Alpha-beta T cell receptors are antigen specific receptors which are essential to the immune response and are present on the cell surface of T lymphocytes. Recognize peptide-major histocompatibility (MH) (pMH) complexes that are displayed by antigen presenting cells (APC), a prerequisite for efficient T cell adaptive immunity against pathogens. Binding of alpha-beta TR to pMH complex initiates TR-CD3 clustering on the cell surface and intracellular activation of LCK that phosphorylates the ITAM motifs of CD3G, CD3D, CD3E and CD247 enabling the recruitment of ZAP70. In turn ZAP70 phosphorylates LAT, which recruits numerous signaling molecules to form the LAT signalosome. The LAT signalosome propagates signal branching to three major signaling pathways, the calcium, the mitogen-activated protein kinase (MAPK) kinase and the nuclear factor-kappa-B (NF-kB) pathways, leading to the mobilization of transcription factors that are critical for gene expression and essential for T cell growth and differentiation. The T cell repertoire is generated in the thymus, by V-(D)-J rearrangement. This repertoire is then shaped by intrathymic selection events to generate a peripheral T cell pool of self-MH restricted, non-autoaggressive T cells. Post-thymic interaction of alpha-beta TR with the pMH complexes shapes TR structural and functional avidity. This chain is T cell receptor alpha variable 8-4, found in Homo sapiens (Human).